A 193-amino-acid chain; its full sequence is ATP-dependent Clp protease proteolytic subunit (193 aa).

The active-site Nucleophile is the serine 98. Histidine 123 is an active-site residue.

It belongs to the peptidase S14 family. As to quaternary structure, fourteen ClpP subunits assemble into 2 heptameric rings which stack back to back to give a disk-like structure with a central cavity, resembling the structure of eukaryotic proteasomes.

Its subcellular location is the cytoplasm. It catalyses the reaction Hydrolysis of proteins to small peptides in the presence of ATP and magnesium. alpha-casein is the usual test substrate. In the absence of ATP, only oligopeptides shorter than five residues are hydrolyzed (such as succinyl-Leu-Tyr-|-NHMec, and Leu-Tyr-Leu-|-Tyr-Trp, in which cleavage of the -Tyr-|-Leu- and -Tyr-|-Trp bonds also occurs).. Cleaves peptides in various proteins in a process that requires ATP hydrolysis. Has a chymotrypsin-like activity. Plays a major role in the degradation of misfolded proteins. The protein is ATP-dependent Clp protease proteolytic subunit of Clostridium acetobutylicum (strain ATCC 824 / DSM 792 / JCM 1419 / IAM 19013 / LMG 5710 / NBRC 13948 / NRRL B-527 / VKM B-1787 / 2291 / W).